Reading from the N-terminus, the 418-residue chain is Tektin-1 (418 aa).

Coiled coils occupy residues 20 to 107, 134 to 177, 266 to 308, and 332 to 383; these read NKSQ…SYKE, QELQ…DLKD, NGLK…QQEG, and VAQY…ENTI.

The protein belongs to the tektin family. Microtubule inner protein component of sperm flagellar doublet microtubules. Post-translationally, ubiquitinated, leading to its degradation. Deubiquitinated by USP16, promoting its stability. In terms of tissue distribution, predominantly expressed in testis.

It is found in the cytoplasm. It localises to the cytoskeleton. The protein localises to the cilium axoneme. The protein resides in the flagellum axoneme. In terms of biological role, microtubule inner protein (MIP) part of the dynein-decorated doublet microtubules (DMTs) in cilia and flagellar axoneme. Forms filamentous polymers in the walls of ciliary and flagellar microtubules. The polypeptide is Tektin-1 (Tekt1) (Rattus norvegicus (Rat)).